We begin with the raw amino-acid sequence, 72 residues long: DNA-directed RNA polymerase subunit epsilon (72 aa).

Belongs to the RNA polymerase subunit epsilon family. As to quaternary structure, RNAP is composed of a core of 2 alpha, a beta and a beta' subunit. The core is associated with a delta subunit, and at least one of epsilon or omega. When a sigma factor is associated with the core the holoenzyme is formed, which can initiate transcription.

The enzyme catalyses RNA(n) + a ribonucleoside 5'-triphosphate = RNA(n+1) + diphosphate. Its function is as follows. A non-essential component of RNA polymerase (RNAP). The chain is DNA-directed RNA polymerase subunit epsilon from Lactiplantibacillus plantarum (strain ATCC BAA-793 / NCIMB 8826 / WCFS1) (Lactobacillus plantarum).